The following is a 509-amino-acid chain: tRNA (guanine(37)-N(1))-methyltransferase (509 aa).

The N-terminal 57 residues, 1–57 (MVLWILWRPFGFSRRLLKLERHSITESKSLIPLAWTSLTQTLSESPGIFLLGQRKRF), are a transit peptide targeting the mitochondrion. S-adenosyl-L-methionine-binding positions include His289, 327–328 (DL), 355–356 (DG), and Asn387. Residues 478 to 509 (TKNPENHEDPPLKRQRTAEAFSDEKTQIASNT) are disordered.

The protein belongs to the class I-like SAM-binding methyltransferase superfamily. TRM5/TYW2 family. Monomer.

The protein resides in the mitochondrion matrix. The protein localises to the nucleus. It is found in the cytoplasm. The enzyme catalyses guanosine(37) in tRNA + S-adenosyl-L-methionine = N(1)-methylguanosine(37) in tRNA + S-adenosyl-L-homocysteine + H(+). In terms of biological role, involved in mitochondrial tRNA methylation. Specifically methylates the N1 position of guanosine-37 in various tRNAs. Methylation is not dependent on the nature of the nucleoside 5' of the target nucleoside. This is the first step in the biosynthesis of wybutosine (yW), a modified base adjacent to the anticodon of tRNAs and required for accurate decoding. This is tRNA (guanine(37)-N(1))-methyltransferase from Macaca fascicularis (Crab-eating macaque).